The primary structure comprises 706 residues: Triadin (706 aa).

The segment at 1–28 (MTEITAEGNASTTTTVIDSKNGSVPKSP) is disordered. The Cytoplasmic segment spans residues 1 to 47 (MTEITAEGNASTTTTVIDSKNGSVPKSPGKVLKRTVTEDLVTTFSSP). The segment covering 8 to 24 (GNASTTTTVIDSKNGSV) has biased composition (polar residues). The chain crosses the membrane as a helical span at residues 48–68 (AAWLLVIALIITWSAVAVVMF). Residues 69 to 706 (DLVDYKNFSA…GKPNSPGPKQ (638 aa)) are Lumenal-facing. A glycan (N-linked (GlcNAc...) asparagine) is linked at N75. Residues 117–127 (DGDEEDDEGDE) are compositionally biased toward acidic residues. 3 disordered regions span residues 117–265 (DGDE…EQKD), 281–663 (DLKP…KKQK), and 684–706 (FPVT…GPKQ). Basic and acidic residues-rich tracts occupy residues 128–254 (DTAK…ESKE), 309–358 (PEEK…KSPD), 372–432 (TKKD…KEEV), 443–518 (AKKE…EVKP), 525–552 (IKKE…EKVL), 570–588 (KKAE…DKPK), and 599–621 (ESGK…RESH). Residue N625 is glycosylated (N-linked (GlcNAc...) asparagine). Residues 628-651 (KAEKPARGSKEGFEDVPASKKAKE) are compositionally biased toward basic and acidic residues.

Interacts with CASQ2. Homooligomer of variable subunit number; disulfide-linked. Interacts with CASQ1 and RYR1 in skeletal muscle. In terms of processing, phosphorylated by CaMK2. N-glycosylated. In terms of tissue distribution, detected in skeletal muscle and in heart (at protein level). Detected in skeletal muscle and in heart.

The protein resides in the sarcoplasmic reticulum membrane. Contributes to the regulation of lumenal Ca2+ release via the sarcoplasmic reticulum calcium release channels RYR1 and RYR2, a key step in triggering skeletal and heart muscle contraction. Required for normal organization of the triad junction, where T-tubules and the sarcoplasmic reticulum terminal cisternae are in close contact. Required for normal skeletal muscle strength. Plays a role in excitation-contraction coupling in the heart and in regulating the rate of heart beats. In Oryctolagus cuniculus (Rabbit), this protein is Triadin (TRDN).